The following is a 249-amino-acid chain: Protection of telomeres protein poz1 (249 aa).

Interacts with pot1, rap1 and tpz1.

It localises to the cytoplasm. It is found in the nucleus. The protein resides in the chromosome. The protein localises to the telomere. Its function is as follows. Telomeric DNA-binding protein that negatively regulates telomerase and telomere length. In Schizosaccharomyces pombe (strain 972 / ATCC 24843) (Fission yeast), this protein is Protection of telomeres protein poz1 (poz1).